The following is a 333-amino-acid chain: Cap-specific mRNA (nucleoside-2'-O-)-methyltransferase (333 aa).

Tyr22 contributes to the mRNA binding site. Residues Gln39, Tyr66, Gly68, Gly72, Asp95, Arg97, Val116, and Asp138 each contribute to the S-adenosyl-L-methionine site. Positions 169 to 249 (PVASSLKWRC…NKIVRNKVVI (81 aa)) are binding to NPH-I. The active-site For methyltransferase activity is Lys175. Residues 177-180 (RCPF), Asp182, 205-207 (SAE), and Glu233 contribute to the mRNA site. A compositionally biased stretch (basic and acidic residues) spans 305–320 (SHEPIQRKISSKDSMS). Residues 305 to 333 (SHEPIQRKISSKDSMSKNRNSKRSVRGNK) are disordered. The segment covering 323-333 (RNSKRSVRGNK) has biased composition (basic residues).

This sequence belongs to the class I-like SAM-binding methyltransferase superfamily. Poxvirus/kinetoplastid 2'-O-MTase family. As to quaternary structure, interacts with poly(A) polymerase catalytic subunit OPG063. Interacts with OPG109 and OPG123; these interactions might help linking transcription to capping and polyadenylation.

It is found in the virion. It carries out the reaction a 5'-end (N(7)-methyl 5'-triphosphoguanosine)-ribonucleoside in mRNA + S-adenosyl-L-methionine = a 5'-end (N(7)-methyl 5'-triphosphoguanosine)-(2'-O-methyl-ribonucleoside) in mRNA + S-adenosyl-L-homocysteine + H(+). Functionally, displays methyltransferase, positive regulation of the poly(A) polymerase and transcription elongation activities. Involved in the modification of both mRNA ends and in intermediate and late gene positive transcription elongation. At the mRNAs 5' end, methylates the ribose 2' OH group of the first transcribed nucleotide, thereby producing a 2'-O-methylpurine cap. At the 3' end, functions as a processivity factor which stimulates the activity of the viral poly(A) polymerase OPG063 that creates mRNA's poly(A) tail. In the presence of OPG102, OPG063 does not dissociate from the RNA allowing tail elongation to around 250 adenylates. The polypeptide is Cap-specific mRNA (nucleoside-2'-O-)-methyltransferase (OPG102) (Cynomys gunnisoni (Gunnison's prairie dog)).